Reading from the N-terminus, the 241-residue chain is tRNA pseudouridine synthase B (241 aa).

Residue aspartate 45 is the Nucleophile of the active site.

This sequence belongs to the pseudouridine synthase TruB family. Type 1 subfamily.

It catalyses the reaction uridine(55) in tRNA = pseudouridine(55) in tRNA. Functionally, responsible for synthesis of pseudouridine from uracil-55 in the psi GC loop of transfer RNAs. The polypeptide is tRNA pseudouridine synthase B (Opitutus terrae (strain DSM 11246 / JCM 15787 / PB90-1)).